The chain runs to 367 residues: Phosphoribosylaminoimidazole-succinocarboxamide synthase (367 aa).

The protein belongs to the SAICAR synthetase family.

It catalyses the reaction 5-amino-1-(5-phospho-D-ribosyl)imidazole-4-carboxylate + L-aspartate + ATP = (2S)-2-[5-amino-1-(5-phospho-beta-D-ribosyl)imidazole-4-carboxamido]succinate + ADP + phosphate + 2 H(+). It participates in purine metabolism; IMP biosynthesis via de novo pathway; 5-amino-1-(5-phospho-D-ribosyl)imidazole-4-carboxamide from 5-amino-1-(5-phospho-D-ribosyl)imidazole-4-carboxylate: step 1/2. This chain is Phosphoribosylaminoimidazole-succinocarboxamide synthase, found in Shewanella sp. (strain MR-7).